The following is a 122-amino-acid chain: Large ribosomal subunit protein uL14 (122 aa).

This sequence belongs to the universal ribosomal protein uL14 family. Part of the 50S ribosomal subunit. Forms a cluster with proteins L3 and L19. In the 70S ribosome, L14 and L19 interact and together make contacts with the 16S rRNA in bridges B5 and B8.

Functionally, binds to 23S rRNA. Forms part of two intersubunit bridges in the 70S ribosome. The protein is Large ribosomal subunit protein uL14 of Picosynechococcus sp. (strain ATCC 27264 / PCC 7002 / PR-6) (Agmenellum quadruplicatum).